Here is an 819-residue protein sequence, read N- to C-terminus: Meiotically up-regulated gene 45 protein (819 aa).

Residues 797–817 (AMCLLTLLIGIYLILQVVFIY) traverse the membrane as a helical segment.

It is found in the membrane. In terms of biological role, has a role in meiosis. This chain is Meiotically up-regulated gene 45 protein (mug45), found in Schizosaccharomyces pombe (strain 972 / ATCC 24843) (Fission yeast).